Reading from the N-terminus, the 116-residue chain is MNLITTIIAITITLSAVLATVSFWLPQITPDAEKLSPYECGFDPLGSARLPFSLRFFLIAILFLLFDLEIALLLPLPWGDQLATPALTLAWSAAVLALLTLGLIYEWTQGGLEWAE.

The next 3 membrane-spanning stretches (helical) occupy residues 3-23 (LITT…TVSF), 56-76 (FFLI…LLPL), and 85-105 (PALT…GLIY).

This sequence belongs to the complex I subunit 3 family.

It is found in the mitochondrion membrane. It catalyses the reaction a ubiquinone + NADH + 5 H(+)(in) = a ubiquinol + NAD(+) + 4 H(+)(out). In terms of biological role, core subunit of the mitochondrial membrane respiratory chain NADH dehydrogenase (Complex I) that is believed to belong to the minimal assembly required for catalysis. Complex I functions in the transfer of electrons from NADH to the respiratory chain. The immediate electron acceptor for the enzyme is believed to be ubiquinone. This is NADH-ubiquinone oxidoreductase chain 3 (MT-ND3) from Salmo trutta (Brown trout).